The sequence spans 38 residues: Mu-agatoxin-Hc1c (38 aa).

Cystine bridges form between C3/C19, C10/C24, C18/C34, and C26/C32. S38 is modified (serine amide).

This sequence belongs to the neurotoxin 07 (Beta/delta-agtx) family. 02 (aga-3) subfamily. In terms of tissue distribution, expressed by the venom gland.

It localises to the secreted. Functionally, insecticidal neurotoxin that induces irreversible neuromuscular blockade in house crickets (A.domesticus). Modifies presynaptic voltage-gated sodium channels (Nav), causing them to open at the normal resting potential of the nerve. This leads to spontaneous release of neurotransmitter and repetitive action potentials in motor neurons. The chain is Mu-agatoxin-Hc1c from Hololena curta (Funnel-web spider).